The primary structure comprises 89 residues: Protein FAM25A (89 aa).

The protein belongs to the FAM25 family.

This is Protein FAM25A from Homo sapiens (Human).